Reading from the N-terminus, the 164-residue chain is Transcriptional regulator MraZ (164 aa).

SpoVT-AbrB domains follow at residues 7–63 and 92–135; these read REQH…EPAV and LDQL…NPDR.

The protein belongs to the MraZ family. As to quaternary structure, forms oligomers.

The protein localises to the cytoplasm. Its subcellular location is the nucleoid. The protein is Transcriptional regulator MraZ of Chlorobaculum parvum (strain DSM 263 / NCIMB 8327) (Chlorobium vibrioforme subsp. thiosulfatophilum).